We begin with the raw amino-acid sequence, 194 residues long: A-type ATP synthase subunit E (194 aa).

Positions 35–56 (DAEADADQIREEREAEVERTIE) are disordered. A compositionally biased stretch (basic and acidic residues) spans 41–56 (DQIREEREAEVERTIE).

This sequence belongs to the V-ATPase E subunit family. Has multiple subunits with at least A(3), B(3), C, D, E, F, H, I and proteolipid K(x).

It localises to the cell membrane. Component of the A-type ATP synthase that produces ATP from ADP in the presence of a proton gradient across the membrane. This Haloarcula marismortui (strain ATCC 43049 / DSM 3752 / JCM 8966 / VKM B-1809) (Halobacterium marismortui) protein is A-type ATP synthase subunit E.